A 110-amino-acid polypeptide reads, in one-letter code: Cytochrome c6 (110 aa).

Residues M1 to A25 form the signal peptide. 4 residues coordinate heme c: C39, C42, H43, and M83.

This sequence belongs to the cytochrome c family. PetJ subfamily. As to quaternary structure, monomer. Binds 1 heme c group covalently per subunit.

Its subcellular location is the plastid. It is found in the chloroplast thylakoid lumen. Its function is as follows. Functions as an electron carrier between membrane-bound cytochrome b6-f and photosystem I in oxygenic photosynthesis. In Porphyra purpurea (Red seaweed), this protein is Cytochrome c6 (petJ).